The chain runs to 98 residues: Integration host factor subunit alpha (98 aa).

The protein belongs to the bacterial histone-like protein family. In terms of assembly, heterodimer of an alpha and a beta chain.

Its function is as follows. This protein is one of the two subunits of integration host factor, a specific DNA-binding protein that functions in genetic recombination as well as in transcriptional and translational control. The protein is Integration host factor subunit alpha of Acinetobacter baumannii (strain AB307-0294).